Here is a 107-residue protein sequence, read N- to C-terminus: Phosphoribosyl-ATP pyrophosphatase (107 aa).

This sequence belongs to the PRA-PH family.

Its subcellular location is the cytoplasm. The enzyme catalyses 1-(5-phospho-beta-D-ribosyl)-ATP + H2O = 1-(5-phospho-beta-D-ribosyl)-5'-AMP + diphosphate + H(+). It functions in the pathway amino-acid biosynthesis; L-histidine biosynthesis; L-histidine from 5-phospho-alpha-D-ribose 1-diphosphate: step 2/9. The sequence is that of Phosphoribosyl-ATP pyrophosphatase from Rhizobium etli (strain CIAT 652).